The sequence spans 176 residues: CASP-like protein 5A1 (176 aa).

The Cytoplasmic segment spans residues 1-35 (MNPSHPAVHPVEAPPTDVHHAPRVRMKDYQGMPGT). Residues 36 to 56 (LGGLALRLGQFCFAVVAFSIM) traverse the membrane as a helical segment. Over 57-67 (LSTDDFSTVTA) the chain is Extracellular. A helical membrane pass occupies residues 68–88 (FCYLVAATVLQCLWSLALAVI). Residues 89–102 (DGYALLVKRSLRNS) are Cytoplasmic-facing. The chain crosses the membrane as a helical span at residues 103–123 (LVVSLFVVGDGVTATLTFAAA). At 124–152 (CASAGITVLIGNDLRECDQNHCGKYETAT) the chain is on the extracellular side. The chain crosses the membrane as a helical span at residues 153–173 (AMAFLSWFMVSPSFLLTFWLL). Topologically, residues 174–176 (ASR) are cytoplasmic.

Belongs to the Casparian strip membrane proteins (CASP) family. In terms of assembly, homodimer and heterodimers.

It is found in the cell membrane. This chain is CASP-like protein 5A1, found in Ginkgo biloba (Ginkgo).